A 112-amino-acid chain; its full sequence is Probable head completion protein 2 (112 aa).

It belongs to the skunalikevirus head completion protein 2 family.

Its subcellular location is the virion. Probably functions as a stopper that is part of the head-tail connector and that locks the viral DNA in the capsid. During assembly, functions as a docking platform which the preassembled tail can bind to. Plays a role in morphogenesis of the virion capsid after genome packaging. The chain is Probable head completion protein 2 from Lactococcus phage p2 (Lactococcus lactis bacteriophage p2).